A 170-amino-acid chain; its full sequence is NADH-ubiquinone oxidoreductase chain 6 (170 aa).

Transmembrane regions (helical) follow at residues 1–21 (MIYM…AVAS), 26–46 (FYAA…IVSF), 49–69 (SFLS…VFAY), 86–106 (VVFY…FLGG), and 138–158 (WVII…GIWV).

It belongs to the complex I subunit 6 family. As to quaternary structure, core subunit of respiratory chain NADH dehydrogenase (Complex I) which is composed of 45 different subunits.

The protein localises to the mitochondrion inner membrane. It catalyses the reaction a ubiquinone + NADH + 5 H(+)(in) = a ubiquinol + NAD(+) + 4 H(+)(out). Core subunit of the mitochondrial membrane respiratory chain NADH dehydrogenase (Complex I) which catalyzes electron transfer from NADH through the respiratory chain, using ubiquinone as an electron acceptor. Essential for the catalytic activity and assembly of complex I. The chain is NADH-ubiquinone oxidoreductase chain 6 (mt-nd6) from Xenopus laevis (African clawed frog).